The chain runs to 201 residues: CASP-like protein 2B2 (201 aa).

Residues 1 to 28 (MSYLGVGVSPGNVTGSSTKMKLIDRKVR) lie on the Cytoplasmic side of the membrane. The helical transmembrane segment at 29–49 (VTELILRSLVCAFALVAAILV) threads the bilayer. The Extracellular portion of the chain corresponds to 50-71 (ATDVQVREIFTIQKKAKFTDMK). A helical membrane pass occupies residues 72-92 (ALVFLVVINGIAAGYSLVQAV). At 93–108 (CCLVGLMKGSVLLSEP) the chain is on the cytoplasmic side. A helical membrane pass occupies residues 109 to 129 (LAWAIFFGDQAVAYLCVAGVA). The Extracellular portion of the chain corresponds to 130 to 166 (AAAQSAAFAKLGQPELQWMKICDMYGKFCNQVGEGIA). Residues 167–187 (SALFACIGMVLISCISAFGVF) traverse the membrane as a helical segment. Residues 188 to 201 (RLYGGSKPRQSSRW) lie on the Cytoplasmic side of the membrane.

It belongs to the Casparian strip membrane proteins (CASP) family. As to quaternary structure, homodimer and heterodimers.

It localises to the cell membrane. The polypeptide is CASP-like protein 2B2 (Arabidopsis lyrata subsp. lyrata (Lyre-leaved rock-cress)).